The following is an 833-amino-acid chain: Vacuolar protein sorting-associated protein 16 homolog (833 aa).

This sequence belongs to the VPS16 family. In terms of assembly, component of the homotypic fusion and vacuole protein sorting (HOPS) complex, composed of Vps16A, car/Vps33A, dor/Vps18, Vps39, Vps11 and lt/Vps41. Interacts with Syx17 (via SNARE domain); the interaction may involve multiple components of the HOPS complex and may promote assembly of the Syx17-Snap29-Vamp7 trans-SNARE complex. Component of the class C core vacuole/endosome tethering (CORVET) complex composed of at least Vps8, dor/Vps18, car/Vps33A and Vps16A; unlike in other species, Vps11 is not part of the Drosophila complex. Due to the reduced number of components the Drosophila CORVET complex is often referred to as the miniCORVET complex. The tethering complex core made up of Vps16A, car/Vps33A and dor/Vps18 and shared by both HOPS and CORVET, preferentially associates with CORVET-specific Vps8 over HOPS-specific lt/Vps41. Interacts with Rab2 (GTP-bound form).

Its subcellular location is the late endosome membrane. It localises to the lysosome membrane. The protein resides in the cytoplasmic vesicle. It is found in the autophagosome. Core component of the class C core vacuole/endosome tethering (CORVET) and the homotypic fusion and vacuole protein sorting (HOPS) tethering complexes involved in endo-lysosomal vesicle trafficking and lysosome biogenesis. The CORVET complex facilitates docking and fusion of endosomal vesicles during endosome maturation, acts upstream of HOPS, but is not involved in autophagic flux. The CORVET complex may cooperate with the early endosomal tether Rbsn-5 to mediate endosomal fusion. The HOPS complex facilitates docking and fusion of lysosomes with late endosomes and several other types of vesicles. The HOPS complex is also involved in autophagy and crinophagy (the elimination of unused secretory granules through their fusion with lysosomes). The HOPS complex mediates autophagocitic flux, probably by binding autophagosome-associated Syx17/syntaxin 17, promoting assembly of the trans-SNARE complex and instigating autophagosome-lysosome fusion. Independent of Syx17/syntaxin 17, HOPS is involved in biosynthetic transport to lysosomes and lysosome-related organelles such as eye-pigment granules. Required for endocytic degradation of boss/bride of sevenless and N/Notch in developing ommatidia. The protein is Vacuolar protein sorting-associated protein 16 homolog of Drosophila melanogaster (Fruit fly).